We begin with the raw amino-acid sequence, 153 residues long: Ubiquitin-conjugating enzyme E2 35 (153 aa).

Positions 5-151 constitute a UBC core domain; it reads NLPRRIIKET…AKEWTRLYAS (147 aa). The active-site Glycyl thioester intermediate is Cys89.

This sequence belongs to the ubiquitin-conjugating enzyme family. As to quaternary structure, interacts with yeast and human Mms2, with the RING domain of RGLG2 and with UEV1A, UEV1B, UEV1C and UEV1D. As to expression, ubiquitously expressed at low level. Mainly expressed in the vasculature.

It carries out the reaction S-ubiquitinyl-[E1 ubiquitin-activating enzyme]-L-cysteine + [E2 ubiquitin-conjugating enzyme]-L-cysteine = [E1 ubiquitin-activating enzyme]-L-cysteine + S-ubiquitinyl-[E2 ubiquitin-conjugating enzyme]-L-cysteine.. Its pathway is protein modification; protein ubiquitination. Functionally, catalyzes the synthesis of non-canonical poly-ubiquitin chains that are linked through 'Lys-63'. This type of poly-ubiquitination does not lead to protein degradation by the proteasome. Mediates transcriptional activation of target genes. Required for postreplication repair of UV-damaged DNA and for adapting root developmental programs to suboptimal availability of iron. This Arabidopsis thaliana (Mouse-ear cress) protein is Ubiquitin-conjugating enzyme E2 35 (UBC35).